A 332-amino-acid chain; its full sequence is 2,3-bisphosphoglycerate-dependent phosphoglycerate mutase 2 (332 aa).

Residues 1 to 48 (MATSTTMSHQAIGSVVSQRPFKASQFLKEPLNNVPMKFRQKRFKIEAT) constitute a chloroplast transit peptide. Substrate-binding positions include 85–92 (RHGESLWN), 98–99 (TG), R135, 189–192 (ERMY), K200, 216–217 (RR), and 260–261 (GN). H86 functions as the Tele-phosphohistidine intermediate in the catalytic mechanism. The active-site Proton donor/acceptor is the E189.

Belongs to the phosphoglycerate mutase family. BPG-dependent PGAM subfamily.

The protein localises to the plastid. It is found in the chloroplast. It carries out the reaction (2R)-2-phosphoglycerate = (2R)-3-phosphoglycerate. The protein operates within carbohydrate degradation; glycolysis; pyruvate from D-glyceraldehyde 3-phosphate: step 3/5. Its function is as follows. Catalyzes the interconversion of 2-phosphoglycerate and 3-phosphoglycerate. The sequence is that of 2,3-bisphosphoglycerate-dependent phosphoglycerate mutase 2 from Arabidopsis thaliana (Mouse-ear cress).